The chain runs to 65 residues: Potassium channel toxin kappa-KTx 2.7 (65 aa).

Positions 1-26 (MKTSGTVYVFLLLLAFGIFTDISSAC) are cleaved as a signal peptide. Positions 27-39 (SEQMDDEDSYEVE) are excised as a propeptide. Disulfide bonds link cysteine 45/cysteine 63 and cysteine 49/cysteine 59.

It belongs to the short scorpion toxin superfamily. Potassium channel inhibitor kappa-KTx family. Kappa-KTx 2 subfamily. Expressed by the venom gland.

Its subcellular location is the secreted. Its function is as follows. Weakly inhibits the Kv7.1/KCNQ1 channel (10 uM of the toxin inhibits currents by 17.8%). The chain is Potassium channel toxin kappa-KTx 2.7 from Heterometrus petersii (Asian forest scorpion).